The following is a 472-amino-acid chain: ATP synthase subunit beta (472 aa).

An ATP-binding site is contributed by 149–156 (GGAGVGKT).

This sequence belongs to the ATPase alpha/beta chains family. As to quaternary structure, F-type ATPases have 2 components, CF(1) - the catalytic core - and CF(0) - the membrane proton channel. CF(1) has five subunits: alpha(3), beta(3), gamma(1), delta(1), epsilon(1). CF(0) has three main subunits: a(1), b(2) and c(9-12). The alpha and beta chains form an alternating ring which encloses part of the gamma chain. CF(1) is attached to CF(0) by a central stalk formed by the gamma and epsilon chains, while a peripheral stalk is formed by the delta and b chains.

It localises to the cell inner membrane. The catalysed reaction is ATP + H2O + 4 H(+)(in) = ADP + phosphate + 5 H(+)(out). Produces ATP from ADP in the presence of a proton gradient across the membrane. The catalytic sites are hosted primarily by the beta subunits. This Pelagibacter ubique (strain HTCC1062) protein is ATP synthase subunit beta.